A 129-amino-acid polypeptide reads, in one-letter code: Small ribosomal subunit protein uS11 (129 aa).

The protein belongs to the universal ribosomal protein uS11 family. Part of the 30S ribosomal subunit. Interacts with proteins S7 and S18. Binds to IF-3.

Functionally, located on the platform of the 30S subunit, it bridges several disparate RNA helices of the 16S rRNA. Forms part of the Shine-Dalgarno cleft in the 70S ribosome. The protein is Small ribosomal subunit protein uS11 of Bradyrhizobium diazoefficiens (strain JCM 10833 / BCRC 13528 / IAM 13628 / NBRC 14792 / USDA 110).